A 336-amino-acid chain; its full sequence is Potassium channel subfamily K member 1 (336 aa).

Residues 1–20 (MLQSLAGSSCVRLVERHRSA) lie on the Cytoplasmic side of the membrane. The helical transmembrane segment at 21 to 41 (WCFGLLVLGYLLYLVFGAVVF) threads the bilayer. Residues 42–103 (SSVELPYEDL…SNASGNWNWD (62 aa)) lie on the Extracellular side of the membrane. N-linked (GlcNAc...) asparagine glycosylation occurs at N95. Positions 104–116 (FTSALFFASTVLS) form an intramembrane region, helical. Residues 117–122 (TTGYGH) lie within the membrane without spanning it. Positions 117 to 122 (TTGYGH) are selectivity filter 1. Over 123-132 (TVPLSDGGKA) the chain is Extracellular. The chain crosses the membrane as a helical span at residues 133 to 156 (FCIIYSVIGIPFTLLFLTAVVQRI). The Cytoplasmic segment spans residues 157–181 (TVHVTRRPVLYFHIRWGFSKQMVGI). Residues 182-202 (VHAVVLGFVTVSCFFFIPAAV) traverse the membrane as a helical segment. The Extracellular segment spans residues 203–211 (FSVLEDDWN). Residues 212–224 (FLESFYFCFISLS) constitute an intramembrane region (helical). The tract at residues 225–230 (TIGLGD) is selectivity filter 2. An intramembrane segment occupies 225–231 (TIGLGDY). Topologically, residues 232-243 (VPGEGYNQKFRE) are extracellular. The chain crosses the membrane as a helical span at residues 244–267 (LYKIGITCYLLLGLIAMLVVLETF). Residues 268-336 (CELHELKKFR…SAYAEDSASH (69 aa)) are Cytoplasmic-facing. Residue K274 forms a Glycyl lysine isopeptide (Lys-Gly) (interchain with G-Cter in SUMO) linkage. The interval 293 to 299 (IVEHDQL) is important for intracellular retention in recycling endosomes.

It belongs to the two pore domain potassium channel (TC 1.A.1.8) family. As to quaternary structure, homodimer; disulfide-linked. Heterodimer with KCNK2; disulfide-linked. In astrocytes, forms mostly heterodimeric potassium channels with KCNK2, with only a minor proportion of functional channels containing homodimeric KCNK1. Interacts with KCNK3 and KCNK9, forming functional heterodimeric channels. Interacts with GNG4. Identified in a complex with PSD and ARF6; interacts only with PSD that is bound to ARF6. Interacts with UBE2I. Post-translationally, sumoylation is controversial. Sumoylated by UBE2I. Not sumoylated when expressed in xenopus oocytes or mammalian cells. Sumoylation inactivates the channel, but does not interfere with expression at the cell membrane. Sumoylation of a single subunit is sufficient to silence the dimeric channel. Sumoylation of KCNK1 is sufficient to silence heterodimeric channels formed by KCNK1 and KCNK3 or KCNK9. Desumoylated by SENP1; this activates the channel. Desumoylated by SENP1; this strongly increases halothane-mediated activation of heterodimeric channels formed with KCNK9. SENP1 treatment has no effect.

It is found in the cell membrane. The protein resides in the recycling endosome. It localises to the synaptic cell membrane. Its subcellular location is the cytoplasmic vesicle. The protein localises to the perikaryon. It is found in the cell projection. The protein resides in the dendrite. It localises to the apical cell membrane. The enzyme catalyses K(+)(in) = K(+)(out). The catalysed reaction is NH4(+)(in) = NH4(+)(out). It carries out the reaction Na(+)(in) = Na(+)(out). It catalyses the reaction Rb(+)(in) = Rb(+)(out). The enzyme catalyses Cs(+)(in) = Cs(+)(out). The catalysed reaction is Li(+)(in) = Li(+)(out). It carries out the reaction L-glutamate(out) = L-glutamate(in). It catalyses the reaction chloride(in) = chloride(out). Ion channel that contributes to passive transmembrane potassium transport and to the regulation of the resting membrane potential in brain astrocytes, but also in kidney and in other tissues. Forms dimeric channels through which potassium ions pass in accordance with their electrochemical gradient. The channel is selective for K(+) ions at physiological potassium concentrations and at neutral pH, but becomes permeable to Na(+) at subphysiological K(+) levels and upon acidification of the extracellular medium. The homodimer has very low potassium channel activity, when expressed in heterologous systems, and can function as weakly inward rectifying potassium channel. Channel activity is modulated by activation of serotonin receptors. Heterodimeric channels containing KCNK1 and KCNK2 have much higher activity, and may represent the predominant form in astrocytes. Heterodimeric channels containing KCNK1 and KCNK3 or KCNK9 have much higher activity. Heterodimeric channels formed by KCNK1 and KCNK9 may contribute to halothane-sensitive currents. Mediates outward rectifying potassium currents in dentate gyrus granule cells and contributes to the regulation of their resting membrane potential. Contributes to the regulation of action potential firing in dentate gyrus granule cells and down-regulates their intrinsic excitability. In astrocytes, the heterodimer formed by KCNK1 and KCNK2 is required for rapid glutamate release in response to activation of G-protein coupled receptors, such as F2R and CNR1. Required for normal ion and water transport in the kidney. Contributes to the regulation of the resting membrane potential of pancreatic beta cells. The low channel activity of homodimeric KCNK1 may be due to sumoylation. The low channel activity may be due to rapid internalization from the cell membrane and retention in recycling endosomes. Permeable to monovalent cations with ion selectivity for K(+) &gt; Rb(+) &gt;&gt; NH4(+) &gt;&gt; Cs(+) = Na(+) = Li(+). This is Potassium channel subfamily K member 1 from Cavia porcellus (Guinea pig).